The sequence spans 389 residues: S-adenosylmethionine synthase (389 aa).

H17 contributes to the ATP binding site. D19 is a Mg(2+) binding site. A K(+)-binding site is contributed by E45. L-methionine-binding residues include E58 and Q101. The tract at residues 101 to 111 (QSPDISQGVDG) is flexible loop. ATP contacts are provided by residues 170–172 (DSK), 237–238 (RF), D246, 252–253 (RK), A269, and K273. D246 is an L-methionine binding site. K277 lines the L-methionine pocket.

Belongs to the AdoMet synthase family. As to quaternary structure, homotetramer; dimer of dimers. The cofactor is Mg(2+). K(+) is required as a cofactor.

The protein resides in the cytoplasm. The catalysed reaction is L-methionine + ATP + H2O = S-adenosyl-L-methionine + phosphate + diphosphate. It functions in the pathway amino-acid biosynthesis; S-adenosyl-L-methionine biosynthesis; S-adenosyl-L-methionine from L-methionine: step 1/1. In terms of biological role, catalyzes the formation of S-adenosylmethionine (AdoMet) from methionine and ATP. The overall synthetic reaction is composed of two sequential steps, AdoMet formation and the subsequent tripolyphosphate hydrolysis which occurs prior to release of AdoMet from the enzyme. This is S-adenosylmethionine synthase from Treponema denticola (strain ATCC 35405 / DSM 14222 / CIP 103919 / JCM 8153 / KCTC 15104).